Reading from the N-terminus, the 245-residue chain is Transcriptional regulatory protein YpdB (245 aa).

In terms of domain architecture, Response regulatory spans 2-116 (KVIIVEDEFL…RITGMLQKLE (115 aa)). D53 is subject to 4-aspartylphosphate. One can recognise an HTH LytTR-type domain in the interval 140–245 (INLVKDERII…VKEFRQLMHL (106 aa)).

Phosphorylated by YpdA.

The protein localises to the cytoplasm. Functionally, member of the two-component regulatory system YpdA/YpdB. YpdB regulates expression of yhjX by binding to its promoter region. This is Transcriptional regulatory protein YpdB (ypdB) from Escherichia coli O6:H1 (strain CFT073 / ATCC 700928 / UPEC).